The primary structure comprises 126 residues: Protein ApaG (126 aa).

Residues 2-126 (SALDDSIRVE…FRLALPGLLH (125 aa)) enclose the ApaG domain.

The sequence is that of Protein ApaG from Shewanella sp. (strain MR-7).